Reading from the N-terminus, the 142-residue chain is Transcription antitermination protein NusB (142 aa).

It belongs to the NusB family.

In terms of biological role, involved in transcription antitermination. Required for transcription of ribosomal RNA (rRNA) genes. Binds specifically to the boxA antiterminator sequence of the ribosomal RNA (rrn) operons. This Latilactobacillus sakei subsp. sakei (strain 23K) (Lactobacillus sakei subsp. sakei) protein is Transcription antitermination protein NusB.